Reading from the N-terminus, the 379-residue chain is tRNA-specific 2-thiouridylase MnmA (379 aa).

ATP contacts are provided by residues 6-13 (AMSGGVDS) and leucine 32. Cysteine 101 functions as the Nucleophile in the catalytic mechanism. Cysteine 101 and cysteine 199 are joined by a disulfide. Glycine 125 provides a ligand contact to ATP. Residues 148 to 150 (KDQ) are interaction with tRNA. Cysteine 199 serves as the catalytic Cysteine persulfide intermediate.

Belongs to the MnmA/TRMU family.

It localises to the cytoplasm. It carries out the reaction S-sulfanyl-L-cysteinyl-[protein] + uridine(34) in tRNA + AH2 + ATP = 2-thiouridine(34) in tRNA + L-cysteinyl-[protein] + A + AMP + diphosphate + H(+). In terms of biological role, catalyzes the 2-thiolation of uridine at the wobble position (U34) of tRNA, leading to the formation of s(2)U34. The chain is tRNA-specific 2-thiouridylase MnmA from Paenarthrobacter aurescens (strain TC1).